The chain runs to 218 residues: Small ribosomal subunit protein mS34 (218 aa).

The interval K180 to V218 is disordered. Basic and acidic residues predominate over residues I196–R212.

Belongs to the mitochondrion-specific ribosomal protein mS34 family. As to quaternary structure, component of the mitochondrial small ribosomal subunit (mt-SSU). Mature mammalian 55S mitochondrial ribosomes consist of a small (28S) and a large (39S) subunit. The 28S small subunit contains a 12S ribosomal RNA (12S mt-rRNA) and 30 different proteins. The 39S large subunit contains a 16S rRNA (16S mt-rRNA), a copy of mitochondrial valine transfer RNA (mt-tRNA(Val)), which plays an integral structural role, and 52 different proteins.

The protein resides in the mitochondrion. Functionally, required for mitochondrial translation, plays a role in maintaining the stability of the small ribosomal subunit and the 12S rRNA that are required for mitoribosome formation. In Homo sapiens (Human), this protein is Small ribosomal subunit protein mS34 (MRPS34).